A 292-amino-acid polypeptide reads, in one-letter code: uncharacterized protein (292 aa).

It localises to the virion. This is an uncharacterized protein from Acanthamoeba polyphaga (Amoeba).